A 322-amino-acid chain; its full sequence is Pyridoxal kinase (322 aa).

The residue at position 1 (M1) is an N-acetylmethionine. Pyridoxal contacts are provided by S22 and T57. Pyridoxal 5'-phosphate is bound at residue T57. S69 bears the Phosphoserine mark. D123 lines the ATP pocket. D123 serves as a coordination point for Na(+). Position 128 (D128) interacts with Mg(2+). T158 provides a ligand contact to Na(+). 160-163 (NQFE) provides a ligand contact to ATP. Residue S174 is modified to Phosphoserine. Position 196 (T196) interacts with Na(+). 196-197 (TS) is an ATP binding site. At S223 the chain carries Phosphoserine. Residues 236-238 (VDA) and T243 each bind ATP. Position 244–245 (244–245 (GD)) interacts with pyridoxal 5'-phosphate. D245 functions as the Proton acceptor in the catalytic mechanism. A Phosphoserine modification is found at S295.

Belongs to the pyridoxine kinase family. Homodimer. The cofactor is Zn(2+). Mg(2+) serves as cofactor. In terms of processing, the N-terminus is blocked.

It localises to the cytoplasm. The protein localises to the cytosol. It carries out the reaction pyridoxal + ATP = pyridoxal 5'-phosphate + ADP + H(+). The catalysed reaction is pyridoxamine + ATP = pyridoxamine 5'-phosphate + ADP + H(+). The enzyme catalyses pyridoxine + ATP = pyridoxine 5'-phosphate + ADP + H(+). Its pathway is cofactor metabolism; pyridoxal 5'-phosphate salvage; pyridoxal 5'-phosphate from pyridoxal: step 1/1. The protein operates within cofactor metabolism; pyridoxal 5'-phosphate salvage; pyridoxine 5'-phosphate from pyridoxine: step 1/1. It participates in cofactor metabolism; pyridoxal 5'-phosphate salvage; pyridoxamine 5'-phosphate from pyridoxamine: step 1/1. Activity is increased in the presence of K(+)or Na(+). Its function is as follows. Catalyzes the phosphorylation of the dietary vitamin B6 vitamers pyridoxal (PL), pyridoxine (PN) and pyridoxamine (PM) to form pyridoxal 5'-phosphate (PLP), pyridoxine 5'-phosphate (PNP) and pyridoxamine 5'-phosphate (PMP), respectively. PLP is the active form of vitamin B6, and acts as a cofactor for over 140 different enzymatic reactions. The polypeptide is Pyridoxal kinase (PDXK) (Sus scrofa (Pig)).